The chain runs to 322 residues: Probable cAMP-dependent protein kinase catalytic subunit (322 aa).

One can recognise a Protein kinase domain in the interval 7–261 (FEFVKVVGVG…ICEIMGHPFF (255 aa)). Residues 13–21 (VGVGAFGKV) and K37 contribute to the ATP site. D132 functions as the Proton acceptor in the catalytic mechanism. In terms of domain architecture, AGC-kinase C-terminal spans 262–322 (KGIDWHEVES…KHLYKVSKGL (61 aa)).

This sequence belongs to the protein kinase superfamily. AGC Ser/Thr protein kinase family. cAMP subfamily.

It catalyses the reaction L-seryl-[protein] + ATP = O-phospho-L-seryl-[protein] + ADP + H(+). It carries out the reaction L-threonyl-[protein] + ATP = O-phospho-L-threonyl-[protein] + ADP + H(+). This chain is Probable cAMP-dependent protein kinase catalytic subunit, found in Encephalitozoon cuniculi (strain GB-M1) (Microsporidian parasite).